Reading from the N-terminus, the 403-residue chain is Phosphopentomutase (403 aa).

Mn(2+)-binding residues include D13, D298, H303, D339, H340, and H351.

Belongs to the phosphopentomutase family. Mn(2+) is required as a cofactor.

Its subcellular location is the cytoplasm. It catalyses the reaction 2-deoxy-alpha-D-ribose 1-phosphate = 2-deoxy-D-ribose 5-phosphate. The enzyme catalyses alpha-D-ribose 1-phosphate = D-ribose 5-phosphate. It participates in carbohydrate degradation; 2-deoxy-D-ribose 1-phosphate degradation; D-glyceraldehyde 3-phosphate and acetaldehyde from 2-deoxy-alpha-D-ribose 1-phosphate: step 1/2. In terms of biological role, isomerase that catalyzes the conversion of deoxy-ribose 1-phosphate (dRib-1-P) and ribose 1-phosphate (Rib-1-P) to deoxy-ribose 5-phosphate (dRib-5-P) and ribose 5-phosphate (Rib-5-P), respectively. In Streptococcus pyogenes serotype M4 (strain MGAS10750), this protein is Phosphopentomutase.